We begin with the raw amino-acid sequence, 194 residues long: MYICFEGIDGSGKTTHAALTASWLRENGYMVHEVREPTDSNIGSLIRSMLSSPDARTPDVQRMLALLFAADRLTLRSKIEGDWAEDVVVSDRCYYSSMVYQGPEEWVCEINRFAPRPDVVILLDIDVEVAMERCGGTDEFEDPLYLAGVRERYLELADKNGFYTVNAERGVNLIQRDIRRILAPHFGICSGGIM.

Residue 7–14 coordinates ATP; the sequence is GIDGSGKT.

It belongs to the thymidylate kinase family.

The enzyme catalyses dTMP + ATP = dTDP + ADP. The chain is Probable thymidylate kinase (tmk) from Methanothermobacter thermautotrophicus (strain ATCC 29096 / DSM 1053 / JCM 10044 / NBRC 100330 / Delta H) (Methanobacterium thermoautotrophicum).